The following is a 509-amino-acid chain: Steroid 17-alpha-hydroxylase/17,20 lyase (509 aa).

N202 lines the substrate pocket. Residue C442 participates in heme binding.

It belongs to the cytochrome P450 family. Heme is required as a cofactor.

Its subcellular location is the endoplasmic reticulum membrane. The protein localises to the microsome membrane. The enzyme catalyses a C21-steroid + reduced [NADPH--hemoprotein reductase] + O2 = a 17alpha-hydroxy-C21-steroid + oxidized [NADPH--hemoprotein reductase] + H2O + H(+). The catalysed reaction is progesterone + reduced [NADPH--hemoprotein reductase] + O2 = 17alpha-hydroxyprogesterone + oxidized [NADPH--hemoprotein reductase] + H2O + H(+). It carries out the reaction pregnenolone + reduced [NADPH--hemoprotein reductase] + O2 = 17alpha-hydroxypregnenolone + oxidized [NADPH--hemoprotein reductase] + H2O + H(+). It catalyses the reaction 17alpha-hydroxyprogesterone + reduced [NADPH--hemoprotein reductase] + O2 = androst-4-ene-3,17-dione + acetate + oxidized [NADPH--hemoprotein reductase] + H2O + 2 H(+). The enzyme catalyses 17alpha-hydroxyprogesterone + reduced [NADPH--hemoprotein reductase] + O2 = 16alpha,17alpha-dihydroxyprogesterone + oxidized [NADPH--hemoprotein reductase] + H2O + H(+). The catalysed reaction is 16alpha,17alpha-dihydroxyprogesterone + reduced [NADPH--hemoprotein reductase] + O2 = 6beta,16alpha,17alpha-trihydroxyprogesterone + oxidized [NADPH--hemoprotein reductase] + H2O + H(+). It carries out the reaction 17alpha-hydroxypregnenolone + reduced [NADPH--hemoprotein reductase] + O2 = 3beta-hydroxyandrost-5-en-17-one + acetate + oxidized [NADPH--hemoprotein reductase] + H2O + 2 H(+). It catalyses the reaction 16alpha,17alpha-dihydroxypregnenolone + reduced [NADPH--hemoprotein reductase] + O2 = 3beta,16alpha-dihydroxy-androst-5-en-17-one + acetate + oxidized [NADPH--hemoprotein reductase] + H2O + 2 H(+). The enzyme catalyses 3beta-hydroxyandrost-5-en-17-one + reduced [NADPH--hemoprotein reductase] + O2 = 3beta,16alpha-dihydroxy-androst-5-en-17-one + oxidized [NADPH--hemoprotein reductase] + H2O + H(+). The catalysed reaction is androst-4-ene-3,17-dione + reduced [NADPH--hemoprotein reductase] + O2 = 16alpha-hydroxyandrost-4-ene-3,17-dione + oxidized [NADPH--hemoprotein reductase] + H2O + H(+). Its pathway is steroid hormone biosynthesis. It participates in steroid biosynthesis; glucocorticoid biosynthesis. With respect to regulation, regulated predominantly by intracellular cAMP levels. The 17,20-lyase activity is stimulated by cytochrome b5, which acts as an allosteric effector increasing the Vmax of the lyase activity. Its function is as follows. A cytochrome P450 monooxygenase involved in corticoid and androgen biosynthesis. Catalyzes 17-alpha hydroxylation of C21 steroids, which is common for both pathways. A second oxidative step, required only for androgen synthesis, involves an acyl-carbon cleavage. The 17-alpha hydroxy intermediates, as part of adrenal glucocorticoids biosynthesis pathway, are precursors of cortisol. Hydroxylates steroid hormones, pregnenolone and progesterone to form 17-alpha hydroxy metabolites, followed by the cleavage of the C17-C20 bond to form C19 steroids, dehydroepiandrosterone (DHEA) and androstenedione. Has 16-alpha hydroxylase activity. Catalyzes 16-alpha hydroxylation of 17-alpha hydroxy pregnenolone, followed by the cleavage of the C17-C20 bond to form 16-alpha-hydroxy DHEA. Also 16-alpha hydroxylates androgens, relevant for estriol synthesis. Mechanistically, uses molecular oxygen inserting one oxygen atom into a substrate, and reducing the second into a water molecule, with two electrons provided by NADPH via cytochrome P450 reductase (CPR; NADPH-ferrihemoprotein reductase). The protein is Steroid 17-alpha-hydroxylase/17,20 lyase (CYP17A1) of Capra hircus (Goat).